The chain runs to 289 residues: Rhodopsin (289 aa).

At 1–7 (YLVNPAA) the chain is on the extracellular side. Residues 8–32 (YAALGAYMFLLILIGFPVNFLTLYV) form a helical membrane-spanning segment. The Cytoplasmic portion of the chain corresponds to 33–44 (TIEHKKLRTPLN). The chain crosses the membrane as a helical span at residues 45–67 (YILLNLAVANLFMVLGGFTTTMY). Topologically, residues 68-81 (TSMHGYFVLGRLGC) are extracellular. Cys-81 and Cys-158 are oxidised to a cystine. The helical transmembrane segment at 82-104 (NLEGFFATMGGEIALWSLVVLAI) threads the bilayer. The 'Ionic lock' involved in activated form stabilization signature appears at 105–107 (ERW). The Cytoplasmic portion of the chain corresponds to 105 to 123 (ERWIVVCKPISNFRFTEDH). Residues 124-144 (AIMGLAFTWVMALSCAVPPLV) form a helical membrane-spanning segment. Over 145–173 (GWSRYIPEGMQCSCGVDYYTRAEGFNNES) the chain is Extracellular. Residue Asn-171 is glycosylated (N-linked (GlcNAc...) asparagine). Residues 174 to 195 (FVIYMFIVHFLTPLIIISFCYG) form a helical membrane-spanning segment. At 196–223 (RLLCAVKEAAAAQQESETTQRAEREVSR) the chain is on the cytoplasmic side. The helical transmembrane segment at 224-245 (MVVMMVISFLMCWLPYASVAWY) threads the bilayer. The Extracellular segment spans residues 246-257 (IFCNQGSEFGPI). A helical transmembrane segment spans residues 258 to 279 (FMTLPAFFAKSSAIYNPLIYIC). Position 267 is an N6-(retinylidene)lysine (Lys-267). The Cytoplasmic segment spans residues 280 to 289 (MNKQFRHCMI).

It belongs to the G-protein coupled receptor 1 family. Opsin subfamily. Phosphorylated on some or all of the serine and threonine residues present in the C-terminal region. In terms of processing, contains one covalently linked retinal chromophore.

It localises to the membrane. The protein resides in the cell projection. It is found in the cilium. The protein localises to the photoreceptor outer segment. Its function is as follows. Photoreceptor required for image-forming vision at low light intensity. While most salt water fish species use retinal as chromophore, most freshwater fish use 3-dehydroretinal, or a mixture of retinal and 3-dehydroretinal. Light-induced isomerization of 11-cis to all-trans retinal triggers a conformational change that activates signaling via G-proteins. Subsequent receptor phosphorylation mediates displacement of the bound G-protein alpha subunit by arrestin and terminates signaling. The protein is Rhodopsin (rho) of Cottocomephorus inermis (Longfin Baikal sculpin).